The following is a 434-amino-acid chain: Histidinol dehydrogenase (434 aa).

The Zn(2+) site is built by Glu260 and His263. Active-site proton acceptor residues include Glu330 and His331. Residue His423 coordinates Zn(2+).

This sequence belongs to the histidinol dehydrogenase family. Zn(2+) serves as cofactor.

The catalysed reaction is L-histidinol + 2 NAD(+) + H2O = L-histidine + 2 NADH + 3 H(+). It participates in amino-acid biosynthesis; L-histidine biosynthesis; L-histidine from 5-phospho-alpha-D-ribose 1-diphosphate: step 9/9. Its function is as follows. Catalyzes the sequential NAD-dependent oxidations of L-histidinol to L-histidinaldehyde and then to L-histidine. The polypeptide is Histidinol dehydrogenase (hisD) (Synechocystis sp. (strain ATCC 27184 / PCC 6803 / Kazusa)).